Reading from the N-terminus, the 157-residue chain is MIRIGQGYDVHKLAYDRDLIIGGVKIPYEKGLLGHSDADVLLHAITDAIIGAIGAGDIGHFFPDTDMVFKDADSAELLAEIWQKVEADGFRLGNLDATIIAEKPKMAPYVEQMKLRIAELLHADSAQVNVKATTTEKLGFTGREEGIASLAVVLLEK.

A divalent metal cation-binding residues include aspartate 9 and histidine 11. 4-CDP-2-C-methyl-D-erythritol 2-phosphate-binding positions include 9–11 (DVH) and 35–36 (HS). Residue histidine 43 coordinates a divalent metal cation. 4-CDP-2-C-methyl-D-erythritol 2-phosphate-binding positions include 57–59 (DIG), 62–66 (FPDTD), 101–107 (AEKPKMA), 133–136 (TTTE), phenylalanine 140, and arginine 143.

Belongs to the IspF family. Homotrimer. A divalent metal cation is required as a cofactor.

The enzyme catalyses 4-CDP-2-C-methyl-D-erythritol 2-phosphate = 2-C-methyl-D-erythritol 2,4-cyclic diphosphate + CMP. Its pathway is isoprenoid biosynthesis; isopentenyl diphosphate biosynthesis via DXP pathway; isopentenyl diphosphate from 1-deoxy-D-xylulose 5-phosphate: step 4/6. Involved in the biosynthesis of isopentenyl diphosphate (IPP) and dimethylallyl diphosphate (DMAPP), two major building blocks of isoprenoid compounds. Catalyzes the conversion of 4-diphosphocytidyl-2-C-methyl-D-erythritol 2-phosphate (CDP-ME2P) to 2-C-methyl-D-erythritol 2,4-cyclodiphosphate (ME-CPP) with a corresponding release of cytidine 5-monophosphate (CMP). The sequence is that of 2-C-methyl-D-erythritol 2,4-cyclodiphosphate synthase from Listeria monocytogenes serovar 1/2a (strain ATCC BAA-679 / EGD-e).